A 142-amino-acid polypeptide reads, in one-letter code: Hemoglobin subunit alpha (142 aa).

Residues 2–142 (VLSPDDKKHV…VSTVLTSKYR (141 aa)) form the Globin domain. Residue S4 is modified to Phosphoserine. N6-succinyllysine occurs at positions 8 and 12. K17 carries the post-translational modification N6-acetyllysine; alternate. The residue at position 17 (K17) is an N6-succinyllysine; alternate. Phosphotyrosine is present on Y25. The residue at position 36 (S36) is a Phosphoserine. K41 carries the post-translational modification N6-succinyllysine. A Phosphoserine modification is found at S50. H59 is an O2 binding site. Residue H88 participates in heme b binding. S103 is subject to Phosphoserine. T109 bears the Phosphothreonine mark. Phosphoserine occurs at positions 125 and 132. Phosphothreonine is present on residues T135 and T138. S139 bears the Phosphoserine mark.

Belongs to the globin family. Heterotetramer of two alpha chains and two beta chains. In terms of tissue distribution, red blood cells.

Its function is as follows. Involved in oxygen transport from the lung to the various peripheral tissues. Functionally, hemopressin acts as an antagonist peptide of the cannabinoid receptor CNR1. Hemopressin-binding efficiently blocks cannabinoid receptor CNR1 and subsequent signaling. This chain is Hemoglobin subunit alpha (HBA), found in Papio anubis (Olive baboon).